The primary structure comprises 345 residues: NADPH dehydrogenase (345 aa).

FMN is bound at residue 23–26; the sequence is SPMC. Tyrosine 28 is a substrate binding site. The FMN site is built by alanine 60 and glutamine 102. 164–167 provides a ligand contact to substrate; the sequence is HGAH. Residues arginine 215 and 307-308 contribute to the FMN site; that span reads GR.

This sequence belongs to the NADH:flavin oxidoreductase/NADH oxidase family. NamA subfamily. In terms of assembly, homotetramer. The cofactor is FMN.

The enzyme catalyses A + NADPH + H(+) = AH2 + NADP(+). Its function is as follows. Catalyzes the reduction of the double bond of an array of alpha,beta-unsaturated aldehydes and ketones. It also reduces the nitro group of nitroester and nitroaromatic compounds. It could have a role in detoxification processes. This chain is NADPH dehydrogenase, found in Bacillus cereus (strain AH820).